The sequence spans 476 residues: UDP-N-acetylmuramate--L-alanine ligase (476 aa).

ATP is bound at residue Gly123–Thr129.

This sequence belongs to the MurCDEF family.

It localises to the cytoplasm. The catalysed reaction is UDP-N-acetyl-alpha-D-muramate + L-alanine + ATP = UDP-N-acetyl-alpha-D-muramoyl-L-alanine + ADP + phosphate + H(+). It participates in cell wall biogenesis; peptidoglycan biosynthesis. Cell wall formation. The sequence is that of UDP-N-acetylmuramate--L-alanine ligase from Nitrosococcus oceani (strain ATCC 19707 / BCRC 17464 / JCM 30415 / NCIMB 11848 / C-107).